The primary structure comprises 243 residues: Uridylate kinase (243 aa).

18–21 (KLGG) contributes to the ATP binding site. Gly59 lines the UMP pocket. Positions 60 and 64 each coordinate ATP. UMP contacts are provided by residues Asp79 and 140-147 (MGMPYFST). 2 residues coordinate ATP: Tyr173 and Asp176.

Belongs to the UMP kinase family. Homohexamer.

It localises to the cytoplasm. It catalyses the reaction UMP + ATP = UDP + ADP. It functions in the pathway pyrimidine metabolism; CTP biosynthesis via de novo pathway; UDP from UMP (UMPK route): step 1/1. With respect to regulation, inhibited by UTP. Functionally, catalyzes the reversible phosphorylation of UMP to UDP. The chain is Uridylate kinase from Corynebacterium efficiens (strain DSM 44549 / YS-314 / AJ 12310 / JCM 11189 / NBRC 100395).